Consider the following 361-residue polypeptide: UPF0283 membrane protein mlr0776 (361 aa).

Residues 1-33 (MTAPRKPAAFRIEPEAAPTQETPKARQAELSRK) are disordered. Basic and acidic residues predominate over residues 23 to 32 (PKARQAELSR). The next 2 helical transmembrane spans lie at 73–93 (LFGS…VGLW) and 108–128 (LGWL…VILI).

This sequence belongs to the UPF0283 family.

The protein resides in the cell inner membrane. The protein is UPF0283 membrane protein mlr0776 of Mesorhizobium japonicum (strain LMG 29417 / CECT 9101 / MAFF 303099) (Mesorhizobium loti (strain MAFF 303099)).